Here is a 192-residue protein sequence, read N- to C-terminus: Interferon (192 aa).

An N-terminal signal peptide occupies residues 1-30 (MAVPASPQHPRGYGILLLTLLMKALAAAAA). 3 disulfide bridges follow: Cys-31-Cys-128, Cys-60-Cys-154, and Cys-67-Cys-167. 2 N-linked (GlcNAc...) asparagine glycosylation sites follow: Asn-70 and Asn-77.

The protein belongs to the alpha/beta interferon family.

The protein resides in the secreted. Functionally, has antiviral activities. The sequence is that of Interferon from Meleagris gallopavo (Wild turkey).